An 81-amino-acid polypeptide reads, in one-letter code: Photosystem I iron-sulfur center (81 aa).

4Fe-4S ferredoxin-type domains follow at residues 2–31 and 39–68; these read SHSV…MVPW and IASA…VRVY. [4Fe-4S] cluster-binding residues include Cys11, Cys14, Cys17, Cys21, Cys48, Cys51, Cys54, and Cys58.

The eukaryotic PSI reaction center is composed of at least 11 subunits. The cofactor is [4Fe-4S] cluster.

It is found in the plastid. The protein resides in the chloroplast thylakoid membrane. It catalyses the reaction reduced [plastocyanin] + hnu + oxidized [2Fe-2S]-[ferredoxin] = oxidized [plastocyanin] + reduced [2Fe-2S]-[ferredoxin]. In terms of biological role, apoprotein for the two 4Fe-4S centers FA and FB of photosystem I (PSI); essential for photochemical activity. FB is the terminal electron acceptor of PSI, donating electrons to ferredoxin. The C-terminus interacts with PsaA/B/D and helps assemble the protein into the PSI complex. Required for binding of PsaD and PsaE to PSI. PSI is a plastocyanin/cytochrome c6-ferredoxin oxidoreductase, converting photonic excitation into a charge separation, which transfers an electron from the donor P700 chlorophyll pair to the spectroscopically characterized acceptors A0, A1, FX, FA and FB in turn. This chain is Photosystem I iron-sulfur center, found in Pleurastrum terricola (Filamentous green alga).